Consider the following 400-residue polypeptide: S-adenosylmethionine synthase (400 aa).

136-141 (GTGSTD) lines the ATP pocket.

It belongs to the AdoMet synthase 2 family. The cofactor is Mg(2+).

It catalyses the reaction L-methionine + ATP + H2O = S-adenosyl-L-methionine + phosphate + diphosphate. It functions in the pathway amino-acid biosynthesis; S-adenosyl-L-methionine biosynthesis; S-adenosyl-L-methionine from L-methionine: step 1/1. Catalyzes the formation of S-adenosylmethionine from methionine and ATP. This is S-adenosylmethionine synthase from Methanospirillum hungatei JF-1 (strain ATCC 27890 / DSM 864 / NBRC 100397 / JF-1).